We begin with the raw amino-acid sequence, 494 residues long: Zinc metalloproteinase/disintegrin (494 aa).

An N-terminal signal peptide occupies residues 1 to 20 (MIQVLLVTICLAVFPFQGSS). The propeptide occupies 21–193 (KTLKSGNVND…KKASHLVATS (173 aa)). The Peptidase M12B domain occupies 201 to 396 (RYVQLVIVAD…HNPPCILNQA (196 aa)). 3 disulfide bridges follow: C311/C391, C351/C375, and C353/C358. Position 336 (H336) interacts with Zn(2+). E337 is an active-site residue. Positions 340 and 346 each coordinate Zn(2+). Positions 410-431 (ELLQNSVNPCYDPVTCQPKEKE) are excised as a propeptide. The Disintegrin domain maps to 417–478 (NPCYDPVTCQ…DCPRNPYKGE (62 aa)). Disulfide bonds link C433/C442, C438/C463, C439/C468, and C451/C470. Residues 455–457 (RGD) carry the Cell attachment site motif. Positions 482–494 (MEWPAPAKGSVLM) are excised as a propeptide.

Belongs to the venom metalloproteinase (M12B) family. P-II subfamily. P-IIa sub-subfamily. In terms of assembly, monomer (disintegrin). Expressed by the venom gland.

It is found in the secreted. Impairs hemostasis in the envenomed animal. In terms of biological role, inhibits ADP-induced platelet aggregation (IC(50)=168 nM). Inhibits alpha-5/beta-1 (ITGA5/ITGB1) integrin and induces the expression of a ligand-induced binding site epitope on beta-1 integrin subunit. Has a direct chemotactic stimulus on human neutrophils in vitro. The sequence is that of Zinc metalloproteinase/disintegrin from Echis ocellatus (Ocellated saw-scaled viper).